The sequence spans 472 residues: MIFVIESKLLQIYRNRNRNINFYTTMDNIMSAEYYLSLYAKYNSKNLDVFRNMLQAIEPSGNNYHILHAYCGIKGLDERFVEELLHRGYSPNETDDDGNYPLHIASKINNNRIVAMLLTHGADPNACDKHNKTPLYYLSGTDDEVIERINLLVQYGAKINNSVDEEGCGPLLACTDPSERVFKKIMSIGFEARIVDKFGKNHIHRHLMSDNPKASTISWMMKLGISPSKPDHDGNTPLHIVCSKTVKNVDIIDLLLPSTDVNKQNKFGDSPLTLLIKTLSPAHLINKLLSTSNVITDQTVNICIFYDRDDVLEIINDKGKQYDSTDFKMAVEVGSIRCVKYLLDNDIICEDAMYYAVLSEYETMVDYLLFNHFSVDSVVNGHTCMSECVRLNNPVILSKLMLHNPTSETMYLTMKAIEKDKLDKSIIIPFIAYFVLMHPDFCKNRRYFTSYKRFVTDYVHEGVSYEVFDDYF.

ANK repeat units lie at residues 97 to 126 (DGNYPLHIASKINNNRIVAMLLTHGADPNA), 130 to 161 (HNKTPLYYLSGTDDEVIERINLLVQYGAKINN), 233 to 263 (DGNTPLHIVCSKTVKNVDIIDLLLPSTDVNK), 267 to 297 (FGDSPLTLLIKTLSPAHLINKLLSTSNVITD), 322 to 351 (YDSTDFKMAVEVGSIRCVKYLLDNDIICED), and 353 to 377 (MYYAVLSEYETMVDYLLFNHFSVDS).

This sequence belongs to the orthopoxvirus OPG037 protein family. May interact with host caspase-9-Apaf-1 complex.

It is found in the host cytoplasm. Inhibits host apoptosis. Acts by associating with host apoptosome. The polypeptide is Inhibitor of Apoptosis OPG037 (OPG037) (Homo sapiens (Human)).